The following is a 124-amino-acid chain: Small ribosomal subunit protein uS12 (124 aa).

A 3-methylthioaspartic acid modification is found at aspartate 89.

Belongs to the universal ribosomal protein uS12 family. As to quaternary structure, part of the 30S ribosomal subunit. Contacts proteins S8 and S17. May interact with IF1 in the 30S initiation complex.

Its function is as follows. With S4 and S5 plays an important role in translational accuracy. In terms of biological role, interacts with and stabilizes bases of the 16S rRNA that are involved in tRNA selection in the A site and with the mRNA backbone. Located at the interface of the 30S and 50S subunits, it traverses the body of the 30S subunit contacting proteins on the other side and probably holding the rRNA structure together. The combined cluster of proteins S8, S12 and S17 appears to hold together the shoulder and platform of the 30S subunit. The protein is Small ribosomal subunit protein uS12 of Glaesserella parasuis serovar 5 (strain SH0165) (Haemophilus parasuis).